The sequence spans 114 residues: UPF0102 protein HPAG1_0809 (114 aa).

The protein belongs to the UPF0102 family.

This is UPF0102 protein HPAG1_0809 from Helicobacter pylori (strain HPAG1).